A 102-amino-acid chain; its full sequence is Ribosomal silencing factor RsfS (102 aa).

The protein belongs to the Iojap/RsfS family. In terms of assembly, interacts with ribosomal protein uL14 (rplN).

It is found in the cytoplasm. Its function is as follows. Functions as a ribosomal silencing factor. Interacts with ribosomal protein uL14 (rplN), blocking formation of intersubunit bridge B8. Prevents association of the 30S and 50S ribosomal subunits and the formation of functional ribosomes, thus repressing translation. This Haemophilus influenzae (strain ATCC 51907 / DSM 11121 / KW20 / Rd) protein is Ribosomal silencing factor RsfS.